Reading from the N-terminus, the 142-residue chain is Hemoglobin subunit alpha-1 (142 aa).

Residues 2–142 (VLSPADKTNV…VSTVLTSKYR (141 aa)) form the Globin domain. Residue His59 participates in O2 binding. His88 is a binding site for heme b.

Belongs to the globin family. Heterotetramer of two alpha chains and two beta chains. Red blood cells.

In terms of biological role, involved in oxygen transport from the lung to the various peripheral tissues. Functionally, hemopressin acts as an antagonist peptide of the cannabinoid receptor CNR1. Hemopressin-binding efficiently blocks cannabinoid receptor CNR1 and subsequent signaling. This is Hemoglobin subunit alpha-1 (HBA1) from Hylobates lar (Lar gibbon).